The chain runs to 255 residues: MVKLQRFSEKKSLIHEFGKFILEKQESALTGDADAVFNIAISGGSMNQALYESLVNDKNIFPHIKWPQWRIFFCDERLVPFEDPQSNYGQFKKTVLDPLVHQGNQLNLGPTVYTINESLIGGGETANRKIAEEYASMLPASFDLILLGCGEDGHTCSLFPGVEFNYLVEEMDRKVLWCNNSPKAPKDRITFTLAVVAEAKSVCFLVRGAAKKAIMHDVLIVKNSELPSVLVNEMVGTKVTWFLDDEAGALIPENC.

The protein belongs to the glucosamine/galactosamine-6-phosphate isomerase family. 6-phosphogluconolactonase subfamily.

It localises to the cytoplasm. The catalysed reaction is 6-phospho-D-glucono-1,5-lactone + H2O = 6-phospho-D-gluconate + H(+). Its pathway is carbohydrate degradation; pentose phosphate pathway; D-ribulose 5-phosphate from D-glucose 6-phosphate (oxidative stage): step 2/3. Functionally, involved in the pentose phosphate pathway via hydrolysis of 6-phosphogluconolactone to 6-phosphogluconate. In Saccharomyces cerevisiae (strain ATCC 204508 / S288c) (Baker's yeast), this protein is 6-phosphogluconolactonase 4.